The chain runs to 360 residues: MFEKFQAAENRYDEINHRLSDPAVIANQDEYKKLMKEHAELEVLVTKYNEYKKLTKEIADAKEMLNEKLDKEFREMVETELKEAQEKLEVLKKEMKILLLPKDPNDERNVIVEIRGGAGGDEAALFAGDLFRMYTRYAERNGWKTEILDSNPTEIGGFKEVVFSIEGNGAYSRLKFESGVHRVQRVPVTEANGRVHTSTVTVAVLPEAEEIDVEINPNDLRIDTYRASGAGGQHINKTDSAIRITHLPTGLVVCCQDQRSQHKNKEKAMKVLRSKLYEMAREQQHNEIAQERKSQVGTGDRSERIRTYNFPQGRVTDHRIGLTLYKIDDILDGDIDEIIDALITTDQASKLANGAEDDED.

N5-methylglutamine is present on Gln-233. Residues 286-305 (NEIAQERKSQVGTGDRSERI) are disordered.

This sequence belongs to the prokaryotic/mitochondrial release factor family. Post-translationally, methylated by PrmC. Methylation increases the termination efficiency of RF1.

It localises to the cytoplasm. Functionally, peptide chain release factor 1 directs the termination of translation in response to the peptide chain termination codons UAG and UAA. The sequence is that of Peptide chain release factor 1 from Acetivibrio thermocellus (strain ATCC 27405 / DSM 1237 / JCM 9322 / NBRC 103400 / NCIMB 10682 / NRRL B-4536 / VPI 7372) (Clostridium thermocellum).